Here is a 119-residue protein sequence, read N- to C-terminus: Fluoride-specific ion channel FluC (119 aa).

4 helical membrane-spanning segments follow: residues 5–25 (ILPLSIGAIFGTTARWLLNLA), 30–50 (LSPATGNLFANWTGALLIGIF), 59–79 (WKLLLITGFFGSLTTLSGFSL), and 92–112 (SALANIFLHTAGSLLLTWLGL). Na(+) contacts are provided by G69 and T72.

The protein belongs to the fluoride channel Fluc/FEX (TC 1.A.43) family.

The protein resides in the cell inner membrane. It carries out the reaction fluoride(in) = fluoride(out). With respect to regulation, na(+) is not transported, but it plays an essential structural role and its presence is essential for fluoride channel function. Fluoride-specific ion channel. Important for reducing fluoride concentration in the cell, thus reducing its toxicity. The sequence is that of Fluoride-specific ion channel FluC from Neisseria gonorrhoeae (strain NCCP11945).